The chain runs to 504 residues: GTPase Der (504 aa).

Residues 3–166 (PVVALVGRPN…QVLAPLAEKL (164 aa)) form the EngA-type G 1 domain. GTP is bound by residues 9 to 16 (GRPNVGKS), 56 to 60 (DTGGI), and 118 to 121 (NKTD). The tract at residues 171 to 190 (VDSDENVADDEQDEWDSDFD) is disordered. Positions 172–190 (DSDENVADDEQDEWDSDFD) are enriched in acidic residues. The EngA-type G 2 domain occupies 216-389 (IKIAIVGRPN…SIQEAYQCAT (174 aa)). GTP-binding positions include 222-229 (GRPNVGKS), 269-273 (DTAGV), and 334-337 (NKWD). The region spanning 390–474 (KKMTTSMLTR…PIRVLFQEGN (85 aa)) is the KH-like domain.

The protein belongs to the TRAFAC class TrmE-Era-EngA-EngB-Septin-like GTPase superfamily. EngA (Der) GTPase family. Associates with the 50S ribosomal subunit.

Its function is as follows. GTPase that plays an essential role in the late steps of ribosome biogenesis. The sequence is that of GTPase Der from Glaesserella parasuis serovar 5 (strain SH0165) (Haemophilus parasuis).